Here is a 497-residue protein sequence, read N- to C-terminus: Protein adenylyltransferase Fic (497 aa).

The tract at residues 1–30 (MGATDQALEAESKTTEPPKTPPVPEQHDRP) is disordered. The helical transmembrane segment at 38-58 (LCHLLVLLFSGGLAAITLHIF) threads the bilayer. TPR repeat units follow at residues 123 to 156 (ALGALRLAQDMYLAGKDDKAARLFQHSLALAPRH) and 157 to 191 (PTVLLRYGEFLEHSQRNIVLADQYYFQALSISPSN). Residues 248 to 253 (TVGIEG) carry the Inhibitory (S/T)XXXE(G/N) motif motif. ATP-binding positions include E252 and 333–336 (VGGH). The 136-residue stretch at 302 to 437 (ITIKDILELH…IRPFVRFIAD (136 aa)) folds into the Fido domain. H380 is a catalytic residue. ATP contacts are provided by residues 384 to 391 (DGNGRTSR), 416 to 417 (YY), and N424. Residues 468–497 (GEGVPQLQSSQMGGGASIPEFHESGSGSLP) form a disordered region.

This sequence belongs to the fic family. As to quaternary structure, homodimer.

The protein localises to the membrane. It catalyses the reaction L-tyrosyl-[protein] + ATP = O-(5'-adenylyl)-L-tyrosyl-[protein] + diphosphate. The enzyme catalyses L-threonyl-[protein] + ATP = 3-O-(5'-adenylyl)-L-threonyl-[protein] + diphosphate. It carries out the reaction 3-O-(5'-adenylyl)-L-threonyl-[protein] + H2O = L-threonyl-[protein] + AMP + H(+). With respect to regulation, the side chain of Glu-252 determines which of the two opposing activities (AMPylase or de-AMPylase) will take place. In response to endoplasmic reticulum stress, mediates de-AMPylase activity. Adenylyltransferase activity is inhibited by the inhibitory helix present at the N-terminus: Glu-252 binds ATP and competes with ATP-binding at Arg-391, thereby preventing adenylyltransferase activity. In unstressed cells, disengagement of Glu-252 promotes adenylyltransferase activity. Activation dissociates ATP-binding from Glu-252, allowing ordered binding of the entire ATP moiety with the alpha-phosphate in an orientation that is productive for accepting an incoming target hydroxyl side chain. Protein that can both mediate the addition of adenosine 5'-monophosphate (AMP) to specific residues of target proteins (AMPylation), and the removal of the same modification from target proteins (de-AMPylation), depending on the context. The side chain of Glu-252 determines which of the two opposing activities (AMPylase or de-AMPylase) will take place. Acts as a key regulator of the unfolded protein response (UPR) by mediating AMPylation or de-AMPylation of Hsc70-3/BiP. In unstressed cells, acts as an adenylyltransferase by mediating AMPylation of Hsc70-3/BiP at 'Thr-518', thereby inactivating it. In response to endoplasmic reticulum stress, acts as a phosphodiesterase by mediating removal of ATP (de-AMPylation) from Hsc70-3/BiP at 'Thr-518', leading to restore HSPA5/BiP activity. This Drosophila ananassae (Fruit fly) protein is Protein adenylyltransferase Fic.